The sequence spans 710 residues: MEFKFSAVVDPSTYQTQGLCDGLTVRYHKNTELEEIDCLRCQEHWREQVGPLGLYRGGLGHPWSGMSIAIPEALPERLGIVSYANELAFLHDDVTDIAKYYQGDEHNNDLKAAFDQVISTGTIKHAGSGKRALQAYVAKRMLSIDNDRAITSLKAWSTFLEKAGRQEDYRFKSEDDYLKYRVHDVGMLFWYGLLTFAQAITIPENELDTCHQLATTAYLHMALVNDLVSWDKERQSAAALGKDYVTNFIFVAMEEHAISEDQAQERCRREIQKATVDYLRVFEEVKARDDLSPDTKRYLESVLYSMSGNVVWSFHSPRYYTDASFSERQLEWMKNGIPKAQTSEGGASGVDQGEVKIHDRTINGHHAVTSNGTGTGSHDTLNGDGTAHENNSRDASIPGRTTNGISNSDTSLLSAVLQAPYEYITALPSKGFREHAIDALNVWFRVPAEKLAIIKSIITILHNASLMLDDLEDGSELRRGKASTHMIFGLGQTINSANYQLVRALQEIQKLGGPKSLLVFTEELHYLYVGQSMDLYWTSNLICPSINEYFRMVEHKTGGLVRLFGRLMALHSTNPVKVDMIDFSNRLGRYFQTRDDYQNLVSAEYTKQKGYCEDLEEGKFSLPLIHLLQTMPENHVLRNVWMQRRVRGTATHAQKETILELMKRNGSLQFTEDTLGILYGHLEKSIGELERRFGAENFQLRLIFELLRNG.

Positions 1–327 are stellata-2,6,19-trien synthase; the sequence is MEFKFSAVVD…RYYTDASFSE (327 aa). Residues aspartate 92 and aspartate 96 each contribute to the Mg(2+) site. Substrate-binding positions include aspartate 92, aspartate 96, 181 to 184, and 229 to 233; these read RVHD and SWDKE. The DDXXD motif 1 motif lies at 92 to 96; sequence DDVTD. The NSE motif signature appears at 278 to 286; that stretch reads YLRVFEEVK. 318–319 is a substrate binding site; the sequence is RY. Positions 328–709 are geranylgeranyl diphosphate synthase; it reads RQLEWMKNGI…LRLIFELLRN (382 aa). Positions 365–404 are disordered; it reads HHAVTSNGTGTGSHDTLNGDGTAHENNSRDASIPGRTTNG. The span at 368-380 shows a compositional bias: polar residues; sequence VTSNGTGTGSHDT. Isopentenyl diphosphate is bound by residues lysine 430, arginine 433, and histidine 462. Mg(2+)-binding residues include aspartate 469 and aspartate 473. Residues 469 to 473 carry the DDXXD motif 2 motif; that stretch reads DDLED. Arginine 478 is a dimethylallyl diphosphate binding site. Residue arginine 479 coordinates isopentenyl diphosphate. Dimethylallyl diphosphate is bound by residues lysine 556, threonine 557, glutamine 592, asparagine 599, lysine 609, and lysine 619.

In the C-terminal section; belongs to the FPP/GGPP synthase family. The protein in the N-terminal section; belongs to the terpene synthase family. As to quaternary structure, hexamer.

It catalyses the reaction 4 isopentenyl diphosphate + dimethylallyl diphosphate = (2E,6E,10E,14E)-geranylfarnesyl diphosphate + 4 diphosphate. The enzyme catalyses (2E,6E,10E,14E)-geranylfarnesyl diphosphate = variecoladiene + diphosphate. It functions in the pathway secondary metabolite biosynthesis; terpenoid biosynthesis. Multifunctional sesterterpene synthase; part of the gene cluster that mediates the biosynthesis of the sesterterpene variecolin. The first step in the pathway is performed by the variecoladiene synthase vrcA that possesses both prenyl transferase and terpene cyclase activity, converting isopentenyl diphosphate and dimethylallyl diphosphate into geranylfarnesyl pyrophosphate (GFPP) and then converting GFPP into the tetracyclic variecoladiene. The cytochrome P450 monooxygenase vrcB then catalyzes multiple oxidations at C-5 and C-20 positions to yield variecolin. The protein is Bifunctional sesterterpene synthase of Aspergillus aculeatus (strain ATCC 16872 / CBS 172.66 / WB 5094).